Here is a 309-residue protein sequence, read N- to C-terminus: Coenzyme PQQ synthesis protein B (309 aa).

The protein belongs to the PqqB family.

The protein operates within cofactor biosynthesis; pyrroloquinoline quinone biosynthesis. Its function is as follows. May be involved in the transport of PQQ or its precursor to the periplasm. In Bradyrhizobium diazoefficiens (strain JCM 10833 / BCRC 13528 / IAM 13628 / NBRC 14792 / USDA 110), this protein is Coenzyme PQQ synthesis protein B.